The primary structure comprises 218 residues: Copper acquisition factor BIM1 (218 aa).

An N-terminal signal peptide occupies residues 1–19 (MFALKSILVTSLITSTALA). Cu(2+)-binding residues include histidine 20 and histidine 65. 3 N-linked (GlcNAc...) asparagine glycosylation sites follow: asparagine 87, asparagine 91, and asparagine 124. Residue aspartate 138 coordinates Cu(2+). N-linked (GlcNAc...) asparagine glycosylation is found at asparagine 158 and asparagine 170. The interval 160-194 (TCTNDASKASNATSTSSGSATATSAAATSSSSGTS) is disordered. Residues 165-194 (ASKASNATSTSSGSATATSAAATSSSSGTS) show a composition bias toward low complexity. Serine 190 is lipidated: GPI-anchor amidated serine. The propeptide at 191–218 (SGTSGAIKEVVGFGALSLALGIAGLIIL) is removed in mature form.

The protein belongs to the X325 family. Interacts with the CUF1-dependent copper transporter CTR1. Requires Cu(2+) as cofactor.

Its subcellular location is the cell membrane. Lytic polysaccharide monooxygenase-like protein that has diverged to biological functions other than polysaccharide degradation since it does not perform oxidative cleavage of polysaccharides. Cell surface-bound protein that functions in the copper-accumulation pathway shared by the CUF1-dependent copper transporter CTR1. Involved in maintaining cell wall integrity during copper deficiency. Binds Cu(2+) with an estimated 1:1 stoichiometry and might serve as an extracellular copper ligand. FRE4 and FRE7 metalloreductases probably function together with CTR1 and BIM1 to liberate the Cu(2+) bound to the BIM1 copper-binding site for subsequent import of Cu(+) into the cell by CTR1, via the reduction of BIM1-bound Cu(2+) to Cu(+) to reduce binding affinity for BIM1 but increase affinity for CTR1. Facilitates copper acquisition in the brain of mammalian hosts and acts as a copper-dependent virulence trait in fungal meningitis. While BIM1 plays a critical role in cryptococcal meningitis, at least in part through its role in copper acquisition, it could play additional roles during copper limitation or as a means to invade and colonize host tissues in the brain, by compromising host carbohydrate integrity via its lytic polysaccharide monooxygenase (LPMO) activity, which has still to be determined. In Cryptococcus neoformans var. grubii serotype A (strain H99 / ATCC 208821 / CBS 10515 / FGSC 9487) (Filobasidiella neoformans var. grubii), this protein is Copper acquisition factor BIM1.